The primary structure comprises 152 residues: Deoxyuridine 5'-triphosphate nucleotidohydrolase (152 aa).

Substrate-binding positions include 71–73 (RSG), asparagine 84, 88–90 (LID), and methionine 98.

The protein belongs to the dUTPase family. Mg(2+) is required as a cofactor.

The catalysed reaction is dUTP + H2O = dUMP + diphosphate + H(+). It participates in pyrimidine metabolism; dUMP biosynthesis; dUMP from dCTP (dUTP route): step 2/2. Functionally, this enzyme is involved in nucleotide metabolism: it produces dUMP, the immediate precursor of thymidine nucleotides and it decreases the intracellular concentration of dUTP so that uracil cannot be incorporated into DNA. This is Deoxyuridine 5'-triphosphate nucleotidohydrolase from Shewanella baltica (strain OS185).